Reading from the N-terminus, the 297-residue chain is Large ribosomal subunit protein uL18 (297 aa).

Gly2 is modified (N-acetylglycine). Residues Lys5 and Lys48 each carry the N6-acetyllysine modification. Residue Ser185 is modified to Phosphoserine. At Lys220 the chain carries N6-acetyllysine; alternate. A Glycyl lysine isopeptide (Lys-Gly) (interchain with G-Cter in SUMO1); alternate cross-link involves residue Lys220. Residue Lys220 forms a Glycyl lysine isopeptide (Lys-Gly) (interchain with G-Cter in SUMO2); alternate linkage. A Phosphothreonine modification is found at Thr232. The tract at residues 253–297 (YEKKPKREVKKKRWNRPKMSLAQKKDRVAQKKASFLRAQERAAES) is disordered. Basic residues predominate over residues 258–268 (KREVKKKRWNR). Ser272 is modified (phosphoserine).

Belongs to the universal ribosomal protein uL18 family. Component of the large ribosomal subunit (LSU). Part of the 5S RNP complex, which is a LSU subcomplex composed of the 5S RNA, RPL5 and RPL11. Component of a hexameric 5S RNP precursor complex, composed of 5S RNA, RRS1, RPF2/BXDC1, RPL5, RPL11 and HEATR3; this complex acts as a precursor for ribosome assembly. Interacts with NVL in an ATP-dependent manner. Interacts with RRP1B. Interacts with IPO5, IPO7 and KPNB1; these interactions may be involved in RPL5 nuclear import for the assembly of ribosomal subunits.

Its subcellular location is the cytoplasm. The protein resides in the nucleus. It is found in the nucleolus. Component of the ribosome, a large ribonucleoprotein complex responsible for the synthesis of proteins in the cell. The small ribosomal subunit (SSU) binds messenger RNAs (mRNAs) and translates the encoded message by selecting cognate aminoacyl-transfer RNA (tRNA) molecules. The large subunit (LSU) contains the ribosomal catalytic site termed the peptidyl transferase center (PTC), which catalyzes the formation of peptide bonds, thereby polymerizing the amino acids delivered by tRNAs into a polypeptide chain. The nascent polypeptides leave the ribosome through a tunnel in the LSU and interact with protein factors that function in enzymatic processing, targeting, and the membrane insertion of nascent chains at the exit of the ribosomal tunnel. As part of the 5S RNP/5S ribonucleoprotein particle it is an essential component of the LSU, required for its formation and the maturation of rRNAs. It also couples ribosome biogenesis to p53/TP53 activation. As part of the 5S RNP it accumulates in the nucleoplasm and inhibits MDM2, when ribosome biogenesis is perturbed, mediating the stabilization and the activation of TP53. In Mus musculus (Mouse), this protein is Large ribosomal subunit protein uL18 (Rpl5).